Consider the following 503-residue polypeptide: ATP synthase subunit alpha (503 aa).

ATP is bound at residue glycine 169–threonine 176.

Belongs to the ATPase alpha/beta chains family. As to quaternary structure, F-type ATPases have 2 components, CF(1) - the catalytic core - and CF(0) - the membrane proton channel. CF(1) has five subunits: alpha(3), beta(3), gamma(1), delta(1), epsilon(1). CF(0) has three main subunits: a(1), b(2) and c(9-12). The alpha and beta chains form an alternating ring which encloses part of the gamma chain. CF(1) is attached to CF(0) by a central stalk formed by the gamma and epsilon chains, while a peripheral stalk is formed by the delta and b chains.

The protein localises to the cell membrane. The catalysed reaction is ATP + H2O + 4 H(+)(in) = ADP + phosphate + 5 H(+)(out). Its function is as follows. Produces ATP from ADP in the presence of a proton gradient across the membrane. The alpha chain is a regulatory subunit. The sequence is that of ATP synthase subunit alpha from Macrococcus caseolyticus (strain JCSC5402) (Macrococcoides caseolyticum).